The chain runs to 115 residues: uncharacterized protein (115 aa).

3 helical membrane-spanning segments follow: residues 23–43, 63–83, and 90–110; these read LVYA…LFFA, AMVT…VVMV, and NVVI…YVAA.

It localises to the cell membrane. This is an uncharacterized protein from Mycobacterium bovis (strain ATCC BAA-935 / AF2122/97).